A 111-amino-acid chain; its full sequence is Small ribosomal subunit protein bS16 (111 aa).

The protein belongs to the bacterial ribosomal protein bS16 family.

In Rickettsia felis (strain ATCC VR-1525 / URRWXCal2) (Rickettsia azadi), this protein is Small ribosomal subunit protein bS16.